The chain runs to 160 residues: Ribosomal RNA large subunit methyltransferase H (160 aa).

S-adenosyl-L-methionine-binding positions include Leu-76, Gly-108, and 127–132; that span reads FGRMTF.

This sequence belongs to the RNA methyltransferase RlmH family. In terms of assembly, homodimer.

The protein resides in the cytoplasm. The enzyme catalyses pseudouridine(1915) in 23S rRNA + S-adenosyl-L-methionine = N(3)-methylpseudouridine(1915) in 23S rRNA + S-adenosyl-L-homocysteine + H(+). Its function is as follows. Specifically methylates the pseudouridine at position 1915 (m3Psi1915) in 23S rRNA. In Methylocella silvestris (strain DSM 15510 / CIP 108128 / LMG 27833 / NCIMB 13906 / BL2), this protein is Ribosomal RNA large subunit methyltransferase H.